The sequence spans 138 residues: Acidic phospholipase A2 AplTX-I (138 aa).

Positions 1-16 (MRTLWIMAVLLLGVEG) are cleaved as a signal peptide. 7 disulfides stabilise this stretch: Cys42/Cys131, Cys44/Cys60, Cys59/Cys111, Cys65/Cys138, Cys66/Cys104, Cys73/Cys97, and Cys91/Cys102. 3 residues coordinate Ca(2+): Tyr43, Gly45, and Gly47. Residue His63 is part of the active site. Residue Asp64 coordinates Ca(2+). The active site involves Asp105.

In terms of assembly, monomer. It depends on Ca(2+) as a cofactor. In terms of tissue distribution, expressed by the venom gland.

It localises to the secreted. The catalysed reaction is a 1,2-diacyl-sn-glycero-3-phosphocholine + H2O = a 1-acyl-sn-glycero-3-phosphocholine + a fatty acid + H(+). Inhibited by divalent cations different from calcium ions (cadmium, magnesium, manganese, zinc), since they act as competitive antagonists of this cofactor. In terms of biological role, snake venom phospholipase A2 (PLA2) that triggers a high neuromuscular toxicity in chick biventer cervicis preparations, but not in mouse phrenic nerve-diaphragm (PND) preparations, suggesting a selective neurotoxin activity towards birds. Does not induce myotoxic, coagulant, anticoagulant, edema, and antibacterial activities. PLA2 catalyzes the calcium-dependent hydrolysis of the 2-acyl groups in 3-sn-phosphoglycerides. This is Acidic phospholipase A2 AplTX-I from Agkistrodon piscivorus leucostoma (Western cottonmouth).